The primary structure comprises 318 residues: MSTRELIVLGTSSAVPTKRRAHNGYFLRWDGHGILFDPGEGTQRQMRYAGISAHDITRVCVTHFHGDHSLGLPGVIQRIARDGVTHPVRVAYPAAGQEYWERLRYATSFVDTEVIEAQPLAGDEVVVSGEDEFTVTALPLDHSIPTYGYRIAEPDRVHMLADRLAARGIRGPAVGRLKAEGFLIDAAGNRVELADYSVVRPGQVFAFVMDTGVCDTAVRLAERADLLVIEATFLNAEAELAARYRHLTAGQAGMIAAQAGVRRLVLTHFSERYGREEEDRFIAEAAACFSGEIVLAQDVMRVAVPSRRSEGGGTVAGA.

7 residues coordinate Zn(2+): His63, His65, Asp67, His68, His142, Asp210, and His268. The active-site Proton acceptor is Asp67.

Belongs to the RNase Z family. In terms of assembly, homodimer. It depends on Zn(2+) as a cofactor.

It catalyses the reaction Endonucleolytic cleavage of RNA, removing extra 3' nucleotides from tRNA precursor, generating 3' termini of tRNAs. A 3'-hydroxy group is left at the tRNA terminus and a 5'-phosphoryl group is left at the trailer molecule.. Functionally, zinc phosphodiesterase, which displays some tRNA 3'-processing endonuclease activity. Probably involved in tRNA maturation, by removing a 3'-trailer from precursor tRNA. This is Ribonuclease Z from Thermobifida fusca (strain YX).